The following is a 534-amino-acid chain: Thromboxane-A synthase (534 aa).

Topologically, residues 1–10 are cytoplasmic; that stretch reads MEVLGFLSPE. The chain crosses the membrane as a helical span at residues 11–31; the sequence is LNGPMVTMALAVVLLALLKWY. Topologically, residues 32–75 are lumenal; it reads STSAFSRLEKLGIRHPKPSPFIGNLTFFRQGFWESHMELRKQYG. The chain crosses the membrane as a helical span at residues 76 to 96; sequence PLSGYYLGRRMIVVISDPDMI. The Cytoplasmic portion of the chain corresponds to 97-223; the sequence is KQVLAEKFSN…RRFFAFSVPR (127 aa). Residues 224-244 form a helical membrane-spanning segment; the sequence is LILVLILSFPSIMVPLARILP. Residues 245–336 are Lumenal-facing; it reads NKKRDEVNGF…LTVDEVVGQA (92 aa). A helical transmembrane segment spans residues 337–357; the sequence is FLFLIAGYEIITNTLSFVTYL. Residues 358–534 lie on the Cytoplasmic side of the membrane; it reads LATNPDCQEK…NGVYIRIVPR (177 aa). Cys480 contacts heme.

Belongs to the cytochrome P450 family. In terms of assembly, monomer. Heme serves as cofactor. As to expression, expressed in lung, kidney and thymus.

The protein localises to the endoplasmic reticulum membrane. It catalyses the reaction prostaglandin H2 = thromboxane A2. The catalysed reaction is prostaglandin H2 = (12S)-hydroxy-(5Z,8E,10E)-heptadecatrienoate + malonaldehyde. The enzyme catalyses a hydroperoxyeicosatetraenoate = an oxoeicosatetraenoate + H2O. It carries out the reaction (15S)-hydroperoxy-(5Z,8Z,11Z,13E)-eicosatetraenoate = 15-oxo-(5Z,8Z,11Z,13E)-eicosatetraenoate + H2O. It catalyses the reaction (15S)-hydroperoxy-(5Z,8Z,11Z,13E)-eicosatetraenoate + AH2 = (15S)-hydroxy-(5Z,8Z,11Z,13E)-eicosatetraenoate + A + H2O. In terms of biological role, catalyzes the conversion of prostaglandin H2 (PGH2) to thromboxane A2 (TXA2), a potent inducer of blood vessel constriction and platelet aggregation. Also cleaves PGH2 to 12-hydroxy-heptadecatrienoicacid (12-HHT) and malondialdehyde, which is known to act as a mediator of DNA damage. 12-HHT and malondialdehyde are formed stoichiometrically in the same amounts as TXA2. Additionally, displays dehydratase activity, toward (15S)-hydroperoxy-(5Z,8Z,11Z,13E)-eicosatetraenoate (15(S)-HPETE) producing 15-KETE and 15-HETE. The polypeptide is Thromboxane-A synthase (TBXAS1) (Sus scrofa (Pig)).